The following is a 34-amino-acid chain: Photosystem II reaction center protein M (34 aa).

Residues 7-27 (GFVASLLFVLVPTVFLIILFI) form a helical membrane-spanning segment.

It belongs to the PsbM family. In terms of assembly, PSII is composed of 1 copy each of membrane proteins PsbA, PsbB, PsbC, PsbD, PsbE, PsbF, PsbH, PsbI, PsbJ, PsbK, PsbL, PsbM, PsbT, PsbX, PsbY, PsbZ, Psb30/Ycf12, peripheral proteins PsbO, CyanoQ (PsbQ), PsbU, PsbV and a large number of cofactors. It forms dimeric complexes.

The protein resides in the cellular thylakoid membrane. Functionally, one of the components of the core complex of photosystem II (PSII). PSII is a light-driven water:plastoquinone oxidoreductase that uses light energy to abstract electrons from H(2)O, generating O(2) and a proton gradient subsequently used for ATP formation. It consists of a core antenna complex that captures photons, and an electron transfer chain that converts photonic excitation into a charge separation. This subunit is found at the monomer-monomer interface. The chain is Photosystem II reaction center protein M from Synechococcus sp. (strain WH7803).